The sequence spans 269 residues: Protein RKD1 (269 aa).

Positions 106–195 (TTTTKKRRCR…EKMEGEENED (90 aa)) constitute an RWP-RK domain. Residues 175-216 (LQKLISNVKELEKMEGEENEDKLRNALEKLEKEKKTIEKLPD) are a coiled coil. Positions 230–269 (CFKANHKRKRRSGMSTPITSSSSSASASSSSYSSVSGFER) are disordered. Positions 249-269 (SSSSSASASSSSYSSVSGFER) are enriched in low complexity.

Its subcellular location is the nucleus. Its function is as follows. Putative transcription factor. The chain is Protein RKD1 (RKD1) from Arabidopsis thaliana (Mouse-ear cress).